The following is a 512-amino-acid chain: PTS system mannitol-specific EIICB component (512 aa).

Residues 1-28 are Cytoplasmic-facing; that stretch reads MSQTEEKKGIGRRVQAFGSFLSSMIMPN. The PTS EIIC type-2 domain maps to 17-349; sequence FGSFLSSMIM…MKFTKEPKQD (333 aa). The helical transmembrane segment at 29–50 threads the bilayer; that stretch reads IGAFIAWGFIAAIFIDNGWFPN. The Extracellular portion of the chain corresponds to 51–54; the sequence is KDLA. Residues 55–75 form a helical membrane-spanning segment; that stretch reads TLAGPMITYLIPLLIAFSGGR. Residues 76–139 lie on the Cytoplasmic side of the membrane; it reads LIYDLRGGII…QGFEMLFNNF (64 aa). Residues 140-161 form a helical membrane-spanning segment; the sequence is SAGILGFIMTIAGFKILAPLMK. Residues 162 to 170 lie on the Extracellular side of the membrane; it reads FIMHILSVA. A helical transmembrane segment spans residues 171-191; sequence VEALVHAHLLPLVSILVEPAK. Residues 192–278 lie on the Cytoplasmic side of the membrane; sequence IVFLNNAINH…VLMRPLLFIA (87 aa). The chain crosses the membrane as a helical span at residues 279–298; sequence VILGGMTGVATYQATGFGFK. Residues 299–318 lie on the Extracellular side of the membrane; that stretch reads SPASPGSFIVYCLNAPRGEF. The helical transmembrane segment at 319-340 threads the bilayer; it reads LHMLLGVFLATLVSFVVAALIM. Over 341–512 the chain is Cytoplasmic; that stretch reads KFTKEPKQDL…LNNLKKDDQA (172 aa). A compositionally biased stretch (low complexity) spans 365-376; it reads SSVASKLVSSDK. Positions 365–401 are disordered; that stretch reads SSVASKLVSSDKNVNTEENASGNVSETSSLDDDPEAL. Polar residues predominate over residues 380 to 392; the sequence is TEENASGNVSETS. The PTS EIIB type-2 domain maps to 419–512; it reads NHVIFACDAG…LNNLKKDDQA (94 aa). Residue C425 is the Phosphocysteine intermediate; for EIIB activity of the active site. Residue C425 is modified to Phosphocysteine; by EIIA.

In terms of assembly, homodimer.

It localises to the cell membrane. It catalyses the reaction D-mannitol(out) + N(pros)-phospho-L-histidyl-[protein] = D-mannitol 1-phosphate(in) + L-histidyl-[protein]. The phosphoenolpyruvate-dependent sugar phosphotransferase system (sugar PTS), a major carbohydrate active transport system, catalyzes the phosphorylation of incoming sugar substrates concomitantly with their translocation across the cell membrane. The enzyme II CmtAB PTS system is involved in D-mannitol transport. This Staphylococcus aureus (strain MRSA252) protein is PTS system mannitol-specific EIICB component (mtlA).